Here is a 695-residue protein sequence, read N- to C-terminus: Putative ATP-dependent RNA helicase L540 (695 aa).

Residues 53-219 (LSALENYQLV…FNSVDSTVID (167 aa)) form the Helicase ATP-binding domain. 66–73 (SSTGSGKS) serves as a coordination point for ATP. The short motif at 164–167 (DEAH) is the DEAH box element. The Helicase C-terminal domain maps to 247–434 (LIEDLIHQQI…GINMMNQLMD (188 aa)).

The protein belongs to the DEAD box helicase family. DEAH subfamily.

Its subcellular location is the virion. It catalyses the reaction ATP + H2O = ADP + phosphate + H(+). The sequence is that of Putative ATP-dependent RNA helicase L540 from Acanthamoeba polyphaga (Amoeba).